Reading from the N-terminus, the 529-residue chain is MAPTALLSVSDKRGVVPLAEALHRLHGYQLLSSGGTAKVLQEAGLPVTRVADHTGAPEILGGRVKTLHPRIHGGILARRGDPAHEADLLEQQIDPIDVVVVNLYPFRETVATPDVSWDAAIENIDIGGPTMVRSAAKNHAHVAVLTSPEQYDRFLKALSGSAGGVNANVRRQLALEAFAHTAAYDVAISRWMQSRPELQPDVEAAAPAEALPWLEALPLRQTLRYGENPHQKAAWFSSPMGWGGAKQLQGKALSTNNLLDLEAALATVREFGYGSSGLHPAQQAAAVVVKHTNPCGVAVGDGVGIALTRALDGDRISAFGGIVALNAVVDGPAAKELTSLFLECVVAPGYSSEALEILAAKGNLRLLELPPEAIDAAPKDHVRSILGGVLVQDLDDQPIDPSAWTVASQRQPTTAETADLRFAWQLVRHVRSNAILVARDGQSLGVGAGQMNRVGSARIALEAAGEQAVGAVLASDGFFPFDDTVRLAASHGIKAVIHPGGSLRDADSIKACDELGLAMVLTGRRHFLH.

An MGS-like domain is found at 1 to 146 (MAPTALLSVS…KNHAHVAVLT (146 aa)).

This sequence belongs to the PurH family.

The enzyme catalyses (6R)-10-formyltetrahydrofolate + 5-amino-1-(5-phospho-beta-D-ribosyl)imidazole-4-carboxamide = 5-formamido-1-(5-phospho-D-ribosyl)imidazole-4-carboxamide + (6S)-5,6,7,8-tetrahydrofolate. It carries out the reaction IMP + H2O = 5-formamido-1-(5-phospho-D-ribosyl)imidazole-4-carboxamide. The protein operates within purine metabolism; IMP biosynthesis via de novo pathway; 5-formamido-1-(5-phospho-D-ribosyl)imidazole-4-carboxamide from 5-amino-1-(5-phospho-D-ribosyl)imidazole-4-carboxamide (10-formyl THF route): step 1/1. It functions in the pathway purine metabolism; IMP biosynthesis via de novo pathway; IMP from 5-formamido-1-(5-phospho-D-ribosyl)imidazole-4-carboxamide: step 1/1. This is Bifunctional purine biosynthesis protein PurH from Synechococcus sp. (strain CC9311).